A 441-amino-acid polypeptide reads, in one-letter code: Protein C-ets-1 (441 aa).

2 positions are modified to N6-acetyllysine; alternate: lysine 8 and lysine 15. Glycyl lysine isopeptide (Lys-Gly) (interchain with G-Cter in SUMO2); alternate cross-links involve residues lysine 8 and lysine 15. A Glycyl lysine isopeptide (Lys-Gly) (interchain with G-Cter in SUMO); alternate cross-link involves residue lysine 15. Threonine 38 is modified (phosphothreonine; by MAPK). Residues 51-136 enclose the PNT domain; sequence ATFSGFTKEQ…EHLEILQKED (86 aa). The tract at residues 130-243 is activation domain; required for transcription activation; the sequence is EILQKEDVKP…DNMCMGRASR (114 aa). Lysine 138 is covalently cross-linked (Glycyl lysine isopeptide (Lys-Gly) (interchain with G-Cter in SUMO2)). Tyrosine 223 is subject to Phosphotyrosine. Lysine 227 is covalently cross-linked (Glycyl lysine isopeptide (Lys-Gly) (interchain with G-Cter in SUMO)). A phosphoserine mark is found at serine 251 and serine 254. Threonine 265 bears the Phosphothreonine mark. A phosphoserine mark is found at serine 267, serine 270, serine 282, and serine 285. A helix HI-1 region spans residues 304–312; sequence FKDYVRDRA. N6-acetyllysine is present on lysine 305. A helix HI-2 region spans residues 323–330; it reads AAALAGYT. Positions 335–415 form a DNA-binding region, ETS; it reads IQLWQFLLEL…AGKRYVYRFV (81 aa). Residues 418 to 422 are helix H4; sequence LQSLL. The segment at 426–432 is helix H5; the sequence is PEELHAM.

It belongs to the ETS family. As to quaternary structure, binds DNA as a homodimer; homodimerization is required for transcription activation. Interacts with MAF and MAFB. Interacts with PAX5; the interaction alters DNA-binding properties. Interacts with DAXX. Interacts with UBE2I. Interacts with SP100; the interaction is direct and modulates ETS1 transcriptional activity. Post-translationally, sumoylated on Lys-15 and Lys-227, preferentially with SUMO2; which inhibits transcriptional activity. Ubiquitinated; which induces proteasomal degradation. In terms of processing, phosphorylation at Ser-251, Ser-282 and Ser-285 by CaMK2/CaMKII in response to calcium signaling decreases affinity for DNA: an increasing number of phosphoserines causes DNA-binding to become progressively weaker.

It is found in the nucleus. The protein resides in the cytoplasm. With respect to regulation, autoinhibited by a module composed of four alpha helices (HI-1, HI-2, H4, and H5) that flank the DNA-binding ETS domain, reducing the affinity for DNA. Phosphorylation by CaMK2/CaMKII in response to calcium signaling decreases affinity for DNA. Transcription factor. Directly controls the expression of cytokine and chemokine genes in a wide variety of different cellular contexts. May control the differentiation, survival and proliferation of lymphoid cells. May also regulate angiogenesis through regulation of expression of genes controlling endothelial cell migration and invasion. This is Protein C-ets-1 (Ets1) from Rattus norvegicus (Rat).